A 463-amino-acid polypeptide reads, in one-letter code: Argininosuccinate lyase (463 aa).

Belongs to the lyase 1 family. Argininosuccinate lyase subfamily.

Its subcellular location is the cytoplasm. The enzyme catalyses 2-(N(omega)-L-arginino)succinate = fumarate + L-arginine. The protein operates within amino-acid biosynthesis; L-arginine biosynthesis; L-arginine from L-ornithine and carbamoyl phosphate: step 3/3. This chain is Argininosuccinate lyase, found in Bacillus cereus (strain AH187).